The sequence spans 168 residues: Plastocyanin, chloroplastic (168 aa).

The N-terminal 70 residues, 1-70 (MASVAAAAVS…SSLLLVASAN (70 aa)), are a transit peptide targeting the chloroplast. Residues 71-168 (AATVKMGGDD…AGMKGVVTVS (98 aa)) enclose the Plastocyanin-like domain. Positions 108, 153, 156, and 161 each coordinate Cu cation.

It belongs to the plastocyanin family. It depends on Cu(2+) as a cofactor.

Its subcellular location is the plastid. It localises to the chloroplast thylakoid membrane. Functionally, participates in electron transfer between P700 and the cytochrome b6-f complex in photosystem I. The protein is Plastocyanin, chloroplastic (PETE) of Physcomitrium patens (Spreading-leaved earth moss).